Consider the following 218-residue polypeptide: Probable 3-keto-L-gulonate-6-phosphate decarboxylase (218 aa).

D11 serves as a coordination point for substrate. Mg(2+)-binding residues include E33 and D62. R194 serves as a coordination point for substrate.

It belongs to the HPS/KGPDC family. KGPDC subfamily. It depends on Mg(2+) as a cofactor.

The catalysed reaction is 3-dehydro-L-gulonate 6-phosphate + H(+) = L-xylulose 5-phosphate + CO2. The protein operates within cofactor degradation; L-ascorbate degradation; D-xylulose 5-phosphate from L-ascorbate: step 2/4. In terms of biological role, catalyzes the decarboxylation of 3-keto-L-gulonate-6-P into L-xylulose-5-P. Is involved in the anaerobic L-ascorbate utilization. The polypeptide is Probable 3-keto-L-gulonate-6-phosphate decarboxylase (ulaD) (Mycoplasma pneumoniae (strain ATCC 29342 / M129 / Subtype 1) (Mycoplasmoides pneumoniae)).